A 260-amino-acid polypeptide reads, in one-letter code: MKLSFTIVATAALVASCTFAAPTPASSKLATRYDGDIIDETNAALKDLGLKKRYDGDIIDETNAALKDLGLKKRYDGDIIDETNAALKDLGLKKRYDGDIIDKTNAALKDLGLKKRYDGDIIDETNAALKDLGLKKRYDGDIIDETNAALKDLGLKKRYDGDIIDETNAALKDLGLKKRYDGDIIDETNAALKDLGLKKRYEGDVLDEINGCLTSLGFRKRYEGDVLDELAAAEKEFGVRKRYEGDVLDAVNGCLKSLGL.

Positions 1–20 are cleaved as a signal peptide; that stretch reads MKLSFTIVATAALVASCTFA.

In terms of processing, rsp1 is processed by the subtilisin-like endoprotease kex2. Cleavage by kex2 generates 11 peptides.

The protein localises to the secreted. Its function is as follows. Repetitive secreted protein essential for pathogenic development. Hum3 and rsp1 together are pathogenicity proteins that share an essential function in early stages of the infection. This Mycosarcoma maydis (Corn smut fungus) protein is Repetitive secreted protein 1.